Consider the following 376-residue polypeptide: Peroxisomal membrane protein PEX14 (376 aa).

Over residues 1-12 the composition is skewed to polar residues; that stretch reads MASSEQAEQPNQ. A disordered region spans residues 1–24; sequence MASSEQAEQPNQPSSPPGSENVVP. At Ala2 the chain carries N-acetylalanine. The Peroxisomal portion of the chain corresponds to 2-108; it reads ASSEQAEQPN…YSPRGSRWRD (107 aa). At Lys34 the chain carries N6-acetyllysine. Residues 70-102 are disordered; that stretch reads SGTAADEPSPLGPATPVVPVQPPHLTPQPYSPR. A compositionally biased stretch (pro residues) spans 88-99; it reads PVQPPHLTPQPY. Residues 109-127 form a helical membrane-spanning segment; that stretch reads YGALAIIMAGIAFGFHQLY. Residues 128-376 are Cytoplasmic-facing; that stretch reads KRYLLPLILG…EGASNETERD (249 aa). Residues 230-376 form a disordered region; sequence PPSPSAPKIP…EGASNETERD (147 aa). Residue Ser232 is modified to Phosphoserine. 2 stretches are compositionally biased toward low complexity: residues 247–259 and 265–275; these read SSSP…VNHH and SPVSNESTSSS. 2 positions are modified to phosphoserine: Ser282 and Ser334. Residues 323–341 show a composition bias toward acidic residues; that stretch reads KEDEDDEDDDVSHVDEEDV. Residues 359–376 are compositionally biased toward basic and acidic residues; it reads QVEKLRRPEGASNETERD.

Belongs to the peroxin-14 family. As to quaternary structure, interacts with PEX13; forming the PEX13-PEX14 docking complex. Interacts with PEX5 (via WxxxF/Y motifs). Interacts with PEX19. Interacts with tubulin.

The protein localises to the peroxisome membrane. Component of the PEX13-PEX14 docking complex, a translocon channel that specifically mediates the import of peroxisomal cargo proteins bound to PEX5 receptor. The PEX13-PEX14 docking complex forms a large import pore which can be opened to a diameter of about 9 nm. Mechanistically, PEX5 receptor along with cargo proteins associates with the PEX14 subunit of the PEX13-PEX14 docking complex in the cytosol, leading to the insertion of the receptor into the organelle membrane with the concomitant translocation of the cargo into the peroxisome matrix. Plays a key role for peroxisome movement through a direct interaction with tubulin. The chain is Peroxisomal membrane protein PEX14 from Mus musculus (Mouse).